The following is a 598-amino-acid chain: Elongation factor 4 (598 aa).

A tr-type G domain is found at 2-184; that stretch reads DNVRNFAIIA…AIITKLPAPQ (183 aa). GTP contacts are provided by residues 14-19 and 131-134; these read DHGKST and NKVD.

Belongs to the TRAFAC class translation factor GTPase superfamily. Classic translation factor GTPase family. LepA subfamily.

The protein localises to the cell membrane. It carries out the reaction GTP + H2O = GDP + phosphate + H(+). Its function is as follows. Required for accurate and efficient protein synthesis under certain stress conditions. May act as a fidelity factor of the translation reaction, by catalyzing a one-codon backward translocation of tRNAs on improperly translocated ribosomes. Back-translocation proceeds from a post-translocation (POST) complex to a pre-translocation (PRE) complex, thus giving elongation factor G a second chance to translocate the tRNAs correctly. Binds to ribosomes in a GTP-dependent manner. The sequence is that of Elongation factor 4 from Wolbachia sp. subsp. Brugia malayi (strain TRS).